The chain runs to 507 residues: UDP-glycosyltransferase 73D1 (507 aa).

Residues serine 298, 359–361, 376–384, and 398–401 contribute to the UDP-alpha-D-glucose site; these read SPQ, HCGWNSTIE, and FAEQ.

This sequence belongs to the UDP-glycosyltransferase family.

The sequence is that of UDP-glycosyltransferase 73D1 (UGT73D1) from Arabidopsis thaliana (Mouse-ear cress).